The chain runs to 529 residues: Tyrosine--tRNA ligase, cytoplasmic (529 aa).

Y39 provides a ligand contact to L-tyrosine. The 'HIGH' region signature appears at 44–52; it reads TTGKPHVAY. 4 residues coordinate L-tyrosine: Y166, Q170, D173, and Q188. A 'KMSKS' region motif is present at residues 222 to 226; the sequence is KMSSS. A Nuclear localization signal motif is present at residues 242–247; sequence KKKLKK. The interval 335–362 is disordered; sequence KLTSSAYPEPSKNKGGVKGNPKQTTDDD. Residues 365-469 enclose the tRNA-binding domain; that stretch reads IPSRLDIRVG…EGSAAGDRVY (105 aa).

The protein belongs to the class-I aminoacyl-tRNA synthetase family. Homodimer.

Its subcellular location is the cytoplasm. The protein localises to the nucleus. The catalysed reaction is tRNA(Tyr) + L-tyrosine + ATP = L-tyrosyl-tRNA(Tyr) + AMP + diphosphate + H(+). In terms of biological role, catalyzes the attachment of tyrosine to tRNA(Tyr) in a two-step reaction: tyrosine is first activated by ATP to form Tyr-AMP and then transferred to the acceptor end of tRNA(Tyr). In Danio rerio (Zebrafish), this protein is Tyrosine--tRNA ligase, cytoplasmic (yars1).